Here is a 573-residue protein sequence, read N- to C-terminus: Sulfate adenylyltransferase (573 aa).

The interval 1–169 is N-terminal; the sequence is MANPPHGGIL…VEAVNKLNHY (169 aa). The tract at residues 170 to 394 is catalytic; it reads DYVGLRFTPA…LRESNPPRSK (225 aa). Gln-197 is a sulfate binding site. Residues 197–200 and 291–294 contribute to the ATP site; these read QTRN and GRDH. Catalysis depends on residues Thr-198, Arg-199, and Asn-200. Residue Arg-199 coordinates sulfate. Ala-295 is a binding site for sulfate. Leu-333 provides a ligand contact to ATP. The segment at 395 to 573 is allosteric regulation domain; adenylyl-sulfate kinase-like; sequence QGFTVFLTGY…LESQGFLEKA (179 aa). 3'-phosphoadenylyl sulfate-binding positions include 434–437, Arg-451, 477–478, and Arg-515; these read DTVR and IA.

In the N-terminal section; belongs to the sulfate adenylyltransferase family. The protein in the C-terminal section; belongs to the APS kinase family. In terms of assembly, homohexamer. Dimer of trimers.

The protein localises to the cytoplasm. The catalysed reaction is sulfate + ATP + H(+) = adenosine 5'-phosphosulfate + diphosphate. Its pathway is sulfur metabolism; hydrogen sulfide biosynthesis; sulfite from sulfate: step 1/3. Its activity is regulated as follows. Allosterically inhibited by 3'-phosphoadenosine 5'-phosphosulfate (PAPS). Its function is as follows. Catalyzes the first intracellular reaction of sulfate assimilation, forming adenosine-5'-phosphosulfate (APS) from inorganic sulfate and ATP. Plays an important role in sulfate activation as a component of the biosynthesis pathway of sulfur-containing amino acids. This Coccidioides immitis (strain RS) (Valley fever fungus) protein is Sulfate adenylyltransferase.